A 291-amino-acid chain; its full sequence is Small ribosomal subunit biogenesis GTPase RsgA (291 aa).

The 159-residue stretch at 63-221 (ENELKRPPVS…IADTPGFSAL (159 aa)) folds into the CP-type G domain. Residues 112-115 (TKKD) and 164-172 (GQSGVGKST) contribute to the GTP site. 4 residues coordinate Zn(2+): Cys-245, Cys-250, His-252, and Cys-258.

It belongs to the TRAFAC class YlqF/YawG GTPase family. RsgA subfamily. In terms of assembly, monomer. Associates with 30S ribosomal subunit, binds 16S rRNA. The cofactor is Zn(2+).

The protein resides in the cytoplasm. One of several proteins that assist in the late maturation steps of the functional core of the 30S ribosomal subunit. Helps release RbfA from mature subunits. May play a role in the assembly of ribosomal proteins into the subunit. Circularly permuted GTPase that catalyzes slow GTP hydrolysis, GTPase activity is stimulated by the 30S ribosomal subunit. The polypeptide is Small ribosomal subunit biogenesis GTPase RsgA (Staphylococcus aureus (strain COL)).